A 327-amino-acid chain; its full sequence is MTITLTENKRKSMEKLSVDGVISALAFDQRGALKRMMAQHQTKEPTVEQIEELKSLVSEELTPFASSILLDPEYGLPASRVRSEEAGLLLAYEKTGYDATTTSRLPDCLDVWSAKRIKEAGAEAVKFLLYYDIDGDQDVNEQKKAYIERIGSECRAEDIPFYLEILTYDEKIADNASPEFAKVKAHKVNEAMKVFSKERFGVDVLKVEVPVNMKFVEGFADGEVLFTKEEAAQAFRDQEASTDLPYIYLSAGVSAKLFQDTLVFAAESGAKFNGVLCGRATWAGSVKVYIEEGPQAAREWLRTEGFKNIDELNKVLDKTASPWTEKM.

It belongs to the aldolase LacD family.

The catalysed reaction is D-tagatofuranose 1,6-bisphosphate = D-glyceraldehyde 3-phosphate + dihydroxyacetone phosphate. The protein operates within carbohydrate metabolism; D-tagatose 6-phosphate degradation; D-glyceraldehyde 3-phosphate and glycerone phosphate from D-tagatose 6-phosphate: step 2/2. The polypeptide is Tagatose 1,6-diphosphate aldolase 2 (lacD2) (Streptococcus pyogenes serotype M1).